Here is an 886-residue protein sequence, read N- to C-terminus: Cytosolic carboxypeptidase-like protein 5 (886 aa).

Residues 157 to 570 form the Peptidase M14 domain; sequence YPFSYSDCQE…AMAIAALDMA (414 aa). Residues His-252 and Glu-255 each contribute to the Zn(2+) site. A compositionally biased stretch (low complexity) spans 344–354; it reads SQSSSEHQPSS. The segment at 344–364 is disordered; the sequence is SQSSSEHQPSSCLPPDAPVSD. His-434 contacts Zn(2+). Glu-516 acts as the Proton donor/acceptor in catalysis. Disordered stretches follow at residues 605–734 and 784–848; these read STLN…SSHK and LQAR…FSPI. A compositionally biased stretch (polar residues) spans 631–640; the sequence is CSENTLSRAR. Positions 641–666 are enriched in low complexity; it reads SFSTGTSAGGSSSSQQNSPQMKNSPS. Residues 696 to 705 are compositionally biased toward basic and acidic residues; sequence REPRSQDRRR. Residues 714 to 732 are compositionally biased toward low complexity; it reads PAGSLAPSPAPTSSGPASS. At Ser-841 the chain carries Phosphoserine.

Belongs to the peptidase M14 family. Requires Zn(2+) as cofactor. Expressed in brain.

The protein localises to the cytoplasm. It is found in the cytosol. It localises to the nucleus. The protein resides in the cytoskeleton. Its subcellular location is the spindle. The protein localises to the midbody. It catalyses the reaction gamma-L-glutamyl-L-glutamyl-[protein] + H2O = L-glutamyl-[protein] + L-glutamate. The enzyme catalyses (L-glutamyl)(n+1)-gamma-L-glutamyl-L-glutamyl-[protein] + H2O = (L-glutamyl)(n)-gamma-L-glutamyl-L-glutamyl-[protein] + L-glutamate. The catalysed reaction is C-terminal L-alpha-aminoacyl-L-glutamyl-[tubulin] + H2O = C-terminal L-alpha-aminoacyl-[tubulin] + L-glutamate. It carries out the reaction C-terminal L-alpha-aminoacyl-L-glutamyl-L-glutamyl-[tubulin] + H2O = C-terminal L-alpha-aminoacyl-L-glutamyl-[tubulin] + L-glutamate. Metallocarboxypeptidase that mediates deglutamylation of tubulin and non-tubulin target proteins. Catalyzes the removal of polyglutamate side chains present on the gamma-carboxyl group of glutamate residues within the C-terminal tail of alpha- and beta-tubulin. Cleaves alpha- and gamma-linked polyglutamate tubulin side-chain, as well as the branching point glutamate. Also catalyzes the removal of alpha-linked glutamate residues from the carboxy-terminus of alpha-tubulin. Mediates deglutamylation of nucleotidyltransferase CGAS, leading to CGAS antiviral defense response activation. In Homo sapiens (Human), this protein is Cytosolic carboxypeptidase-like protein 5.